Consider the following 484-residue polypeptide: ATP-dependent RNA helicase DDX25 (484 aa).

At Thr49 the chain carries Phosphothreonine. The Nuclear export signal motif lies at Leu62–Ser75. A Q motif motif is present at residues Lys98–Glu126. Positions Glu101–Ala115 match the Nuclear localization signal motif. The region spanning Met131 to Ile301 is the Helicase ATP-binding domain. Ser144–Thr151 serves as a coordination point for ATP. The short motif at Asp248–Asp251 is the DEAD box element. The Helicase C-terminal domain maps to Asn312–Ile479.

The protein belongs to the DEAD box helicase family. Phosphorylated on threonine residues. The phosphorylated form is found in the cytoplasm but not in the nucleus. As to expression, isoform 1 is expressed in germ cells. Isoform 2 is expressed in Leydig cells and in round spermatids of adult testis upon gonadotropin stimulation.

Its subcellular location is the cytoplasm. It is found in the nucleus. The catalysed reaction is ATP + H2O = ADP + phosphate + H(+). In terms of biological role, ATP-dependent RNA helicase. Required for mRNA export and translation regulation during spermatid development. The protein is ATP-dependent RNA helicase DDX25 (Ddx25) of Mus musculus (Mouse).